Reading from the N-terminus, the 308-residue chain is ADP-L-glycero-D-manno-heptose-6-epimerase (308 aa).

NADP(+) is bound by residues 10–11 (MI), 31–32 (DN), Lys-38, Lys-53, 75–79 (EGACS), and Asn-92. The active-site Proton acceptor is Tyr-139. Position 143 (Lys-143) interacts with NADP(+). Asn-168 contacts substrate. Residues Val-169 and Lys-177 each coordinate NADP(+). The active-site Proton acceptor is the Lys-177. Residues Ser-179, His-186, 200–203 (FAGS), Arg-208, and Tyr-271 each bind substrate.

Belongs to the NAD(P)-dependent epimerase/dehydratase family. HldD subfamily. In terms of assembly, homopentamer. It depends on NADP(+) as a cofactor.

The catalysed reaction is ADP-D-glycero-beta-D-manno-heptose = ADP-L-glycero-beta-D-manno-heptose. It participates in nucleotide-sugar biosynthesis; ADP-L-glycero-beta-D-manno-heptose biosynthesis; ADP-L-glycero-beta-D-manno-heptose from D-glycero-beta-D-manno-heptose 7-phosphate: step 4/4. Its function is as follows. Catalyzes the interconversion between ADP-D-glycero-beta-D-manno-heptose and ADP-L-glycero-beta-D-manno-heptose via an epimerization at carbon 6 of the heptose. The chain is ADP-L-glycero-D-manno-heptose-6-epimerase from Mannheimia succiniciproducens (strain KCTC 0769BP / MBEL55E).